We begin with the raw amino-acid sequence, 150 residues long: Large ribosomal subunit protein bL9 (150 aa).

This sequence belongs to the bacterial ribosomal protein bL9 family.

Binds to the 23S rRNA. This chain is Large ribosomal subunit protein bL9, found in Streptococcus pyogenes serotype M2 (strain MGAS10270).